A 1262-amino-acid chain; its full sequence is Unconventional myosin-VI (1262 aa).

Positions 2 to 53 (EDGKPVWAPHPTDGFQMGNIVDIGPDSLTIEPLNQKGKTFLALINQVFPAEE) constitute a Myosin N-terminal SH3-like domain. One can recognise a Myosin motor domain in the interval 57–771 (KDVEDNCSLM…KFAEFDQIMK (715 aa)). 151–158 (GESGAGKT) provides a ligand contact to ATP. S267 carries the phosphoserine modification. Residues 273–317 (YLNRGCTRFFANKETDKQILQNRKSPEYVKAGSLKDPLLDDHGDF) form a responsible for slow ATPase activity region. A Phosphothreonine modification is found at T405. S604 carries the post-translational modification Phosphoserine. Actin-binding regions lie at residues 651-673 (LNLL…KPNL) and 665-672 (FIRCIKPN). A required for binding calmodulin region spans residues 782 to 810 (KRVNLWLVCSRWKKVQWCSLSVIKLKNKI). Positions 814–834 (AEACIKMQKTIRMWLCKRRHK) constitute an IQ domain. The tract at residues 835–916 (PRIDGLVKVG…EDLLSALQKK (82 aa)) is three-helix bundle. A coiled-coil region spans residues 864–984 (KPEVNRQIKN…EDDEKRIQAE (121 aa)). Residues 917-984 (KQQEEEAERL…EDDEKRIQAE (68 aa)) are SAH. Residues 933-955 (MEKERKRREEDEERRRKEEEERR) form a disordered region. S1025 carries the phosphoserine modification. The segment at 1034-1253 (LRRGPAVQAT…ESRQARPTYA (220 aa)) is interaction with TAX1BP1 and CALCOCO2/NDP52. Residues 1084–1086 (RRL) are interaction with OPTN. Position 1123 is a phosphoserine (S1123). The interaction with TOM1 stretch occupies residues 1125–1253 (QQNPAAQLPA…ESRQARPTYA (129 aa)).

This sequence belongs to the TRAFAC class myosin-kinesin ATPase superfamily. Myosin family. In terms of assembly, homodimer; dimerization seems to implicate the unfolding of the three-helix bundle region creating an additional calmodulin binding site, and cargo binding. Able to function as a monomer under specific conditions in vitro. Forms a complex with CFTR and DAB2 in the apical membrane of epithelial cells. Component of the DISP/DOCK7-induced septin displacement complex, at least composed of DOCK7, LRCH3 and MYO6. Binding to calmodulin through a unique insert, not found in other myosins, located in the neck region between the motor domain and the IQ domain appears to contribute to the directionality reversal. This interaction occurs only if the C-terminal lobe of calmodulin is occupied by calcium. Interaction with F-actin/ACTN1 occurs only at the apical brush border domain of the proximal tubule cells. Interacts with DAB2. In vitro, the C-terminal globular tail binds a C-terminal region of DAB2. Interacts with CFTR. Interacts with CABP5. Interacts (via residues 1128-1256) with TOM1 (via residues 392-463). Interacts (via residues 1060-1285) with OPTN. Interacts (via residues 1060-1285) with TAX1BP1 and CALCOCO2/NDP52. Interacts with TOM1L2. Interacts with CLIC5; may work together in a complex which also includes RDX and MYO6 to stabilize linkages between the plasma membrane and subjacent actin cytoskeleton at the base of stereocilia. Phosphorylation in the motor domain, induced by EGF, results in translocation of MYO6 from the cell surface to membrane ruffles and affects F-actin dynamics. Phosphorylated in vitro by p21-activated kinase (PAK). Within the cochlea, expressed specifically within the sensory hair cells (at protein level). Expressed in the inner and outer plexiform layer of the retina (at protein level). Widely expressed. Expressed in the brain, kidney, liver, and testis.

The protein resides in the golgi apparatus. It localises to the trans-Golgi network membrane. Its subcellular location is the nucleus. The protein localises to the cytoplasm. It is found in the perinuclear region. The protein resides in the membrane. It localises to the clathrin-coated pit. Its subcellular location is the cytoplasmic vesicle. The protein localises to the clathrin-coated vesicle. It is found in the cell projection. The protein resides in the filopodium. It localises to the ruffle membrane. Its subcellular location is the microvillus. The protein localises to the cytosol. Functionally, myosins are actin-based motor molecules with ATPase activity. Unconventional myosins serve in intracellular movements. Myosin 6 is a reverse-direction motor protein that moves towards the minus-end of actin filaments. Has slow rate of actin-activated ADP release due to weak ATP binding. Functions in a variety of intracellular processes such as vesicular membrane trafficking and cell migration. Required for the structural integrity of the Golgi apparatus via the p53-dependent pro-survival pathway. Appears to be involved in a very early step of clathrin-mediated endocytosis in polarized epithelial cells. Together with TOM1, mediates delivery of endocytic cargo to autophagosomes thereby promoting autophagosome maturation and driving fusion with lysosomes. Links TOM1 with autophagy receptors, such as TAX1BP1; CALCOCO2/NDP52 and OPTN. May act as a regulator of F-actin dynamics. As part of the DISP complex, may regulate the association of septins with actin and thereby regulate the actin cytoskeleton. May play a role in transporting DAB2 from the plasma membrane to specific cellular targets. May play a role in the extension and network organization of neurites. Required for structural integrity of inner ear hair cells. Required for the correct localization of CLIC5 and RDX at the stereocilium base. Modulates RNA polymerase II-dependent transcription. The chain is Unconventional myosin-VI (Myo6) from Mus musculus (Mouse).